Consider the following 522-residue polypeptide: 2-isopropylmalate synthase (522 aa).

Residues 5-267 (VIIFDTTLRD…ETGINAKEIH (263 aa)) form the Pyruvate carboxyltransferase domain. Aspartate 14, histidine 202, histidine 204, and asparagine 238 together coordinate Mn(2+). The segment at 392-522 (QLQQLVVQSD…MHKNRELGGV (131 aa)) is regulatory domain.

This sequence belongs to the alpha-IPM synthase/homocitrate synthase family. LeuA type 1 subfamily. In terms of assembly, homodimer. Requires Mn(2+) as cofactor.

The protein localises to the cytoplasm. It carries out the reaction 3-methyl-2-oxobutanoate + acetyl-CoA + H2O = (2S)-2-isopropylmalate + CoA + H(+). The protein operates within amino-acid biosynthesis; L-leucine biosynthesis; L-leucine from 3-methyl-2-oxobutanoate: step 1/4. Its function is as follows. Catalyzes the condensation of the acetyl group of acetyl-CoA with 3-methyl-2-oxobutanoate (2-ketoisovalerate) to form 3-carboxy-3-hydroxy-4-methylpentanoate (2-isopropylmalate). This chain is 2-isopropylmalate synthase, found in Shewanella sp. (strain ANA-3).